A 745-amino-acid chain; its full sequence is MEVMNLMEQPIKVTEWQQTYTYDSGIHSGANTCVPSVSSKGIMEEDEACGRQYTLKKTTTYTQGVPPSQGDLEYQMSTTARAKRVREAMCPGVSGEDSSLLLATQVEGQATNLQRLAEPSQLLKSAIVHLINYQDDAELATRALPELTKLLNDEDPVVVTKAAMIVNQLSKKEASRRALMGSPQLVAAVVRTMQNTSDLDTARCTTSILHNLSHHREGLLAIFKSGGIPALVRMLSSPVESVLFYAITTLHNLLLYQEGAKMAVRLADGLQKMVPLLNKNNPKFLAITTDCLQLLAYGNQESKLIILANGGPQALVQIMRNYSYEKLLWTTSRVLKVLSVCPSNKPAIVEAGGMQALGKHLTSNSPRLVQNCLWTLRNLSDVATKQEGLESVLKILVNQLSVDDVNVLTCATGTLSNLTCNNSKNKTLVTQNSGVEALIHAILRAGDKDDITEPAVCALRHLTSRHPEAEMAQNSVRLNYGIPAIVKLLNQPNQWPLVKATIGLIRNLALCPANHAPLQEAAVIPRLVQLLVKAHQDAQRHVAAGTQQPYTDGVRMEEIVEGCTGALHILARDPMNRMEIFRLNTIPLFVQLLYSSVENIQRVAAGVLCELAQDKEAADAIDAEGASAPLMELLHSRNEGTATYAAAVLFRISEDKNPDYRKRVSVELTNSLFKHDPAAWEAAQSMIPINEPYGDDMDATYRPMYSSDVPLDPLEMHMDMDGDYPIDTYSDGLRPPYPTADHMLA.

Met1 is modified (N-acetylmethionine). An O-linked (GlcNAc) threonine glycan is attached at Thr14. Residues Ser99 and Ser125 each carry the phosphoserine modification. ARM repeat units follow at residues 132 to 171 (NYQD…QLSK), 172 to 215 (KEAS…LSHH), 216 to 255 (REGL…NLLL), 258 to 297 (EGAK…LLAY), 298 to 341 (GNQE…LSVC), 342 to 381 (PSNK…NLSD), 383 to 420 (ATKQ…NLTC), 423 to 464 (SKNK…HLTS), 470 to 510 (EMAQ…NLAL), 512 to 551 (PANH…QPYT), 574 to 613 (PMNR…ELAQ), and 615 to 661 (KEAA…PDYR). The segment at 132 to 297 (NYQDDAELAT…TTDCLQLLAY (166 aa)) is interaction with DSC1 and DSG1. Ser182 bears the Phosphoserine mark. An interaction with DSC1 region spans residues 574 to 661 (PMNRMEIFRL…ISEDKNPDYR (88 aa)). Phosphoserine occurs at positions 665 and 730.

This sequence belongs to the beta-catenin family. Homodimer. Component of an E-cadherin/catenin adhesion complex composed of at least E-cadherin/CDH1 and gamma-catenin/JUP, and possibly alpha-catenin/CTNNA1; the complex is located to adherens junctions. The stable association of CTNNA1 is controversial as CTNNA1 was shown not to bind to F-actin when assembled in the complex. Interacts with MUC1. Interacts with CAV1. Interacts with PTPRJ. Interacts with DSG1. Interacts with DSC1 and DSC2. Interacts with PKP2. Interacts with PKP3 (via N-terminus); the interaction is required for PKP3 localization to desmosome cell-cell junctions. Interacts with DSG4. Post-translationally, may be phosphorylated by FER. In terms of tissue distribution, expressed in the heart (at protein level).

The protein localises to the cell junction. Its subcellular location is the adherens junction. It is found in the desmosome. The protein resides in the cytoplasm. It localises to the cytoskeleton. The protein localises to the cell membrane. Its subcellular location is the nucleus. Functionally, common junctional plaque protein. The membrane-associated plaques are architectural elements in an important strategic position to influence the arrangement and function of both the cytoskeleton and the cells within the tissue. The presence of plakoglobin in both the desmosomes and in the intermediate junctions suggests that it plays a central role in the structure and function of submembranous plaques. Acts as a substrate for VE-PTP and is required by it to stimulate VE-cadherin function in endothelial cells. Can replace beta-catenin in E-cadherin/catenin adhesion complexes which are proposed to couple cadherins to the actin cytoskeleton. The chain is Junction plakoglobin from Homo sapiens (Human).